The sequence spans 388 residues: Processive diacylglycerol beta-glucosyltransferase (388 aa).

Belongs to the glycosyltransferase 28 family. UgtP subfamily.

It localises to the cell membrane. The enzyme catalyses a 1,2-diacyl-3-O-(beta-D-glucopyranosyl)-sn-glycerol + UDP-alpha-D-glucose = a 1,2-diacyl-3-O-(beta-D-Glc-(1-&gt;6)-beta-D-Glc)-sn-glycerol + UDP + H(+). It carries out the reaction a 1,2-diacyl-3-O-(beta-D-Glc-(1-&gt;6)-beta-D-Glc)-sn-glycerol + UDP-alpha-D-glucose = a 1,2-diacyl-3-O-(beta-D-Glc-(1-&gt;6)-beta-D-Glc-(1-&gt;6)-beta-D-Glc)-sn-glycerol + UDP + H(+). The catalysed reaction is a 1,2-diacyl-sn-glycerol + UDP-alpha-D-glucose = a 1,2-diacyl-3-O-(beta-D-glucopyranosyl)-sn-glycerol + UDP + H(+). It functions in the pathway glycolipid metabolism; diglucosyl-diacylglycerol biosynthesis. In terms of biological role, processive glucosyltransferase involved in the biosynthesis of both the bilayer- and non-bilayer-forming membrane glucolipids. Is able to successively transfer up to three glucosyl residues to diacylglycerol (DAG), thereby catalyzing the formation of beta-monoglucosyl-DAG (3-O-(beta-D-glucopyranosyl)-1,2-diacyl-sn-glycerol), beta-diglucosyl-DAG (3-O-(beta-D-glucopyranosyl-beta-(1-&gt;6)-D-glucopyranosyl)-1,2-diacyl-sn-glycerol) and beta-triglucosyl-DAG (3-O-(beta-D-glucopyranosyl-beta-(1-&gt;6)-D-glucopyranosyl-beta-(1-&gt;6)-D-glucopyranosyl)-1,2-diacyl-sn-glycerol). Beta-diglucosyl-DAG is the predominant glycolipid found in Bacillales and is also used as a membrane anchor for lipoteichoic acid (LTA). The sequence is that of Processive diacylglycerol beta-glucosyltransferase from Bacillus cereus (strain B4264).